Here is a 102-residue protein sequence, read N- to C-terminus: ATP-dependent Clp protease adapter protein ClpS (102 aa).

Belongs to the ClpS family. In terms of assembly, binds to the N-terminal domain of the chaperone ClpA.

Functionally, involved in the modulation of the specificity of the ClpAP-mediated ATP-dependent protein degradation. This Shewanella halifaxensis (strain HAW-EB4) protein is ATP-dependent Clp protease adapter protein ClpS.